The following is a 558-amino-acid chain: Cytochrome P450 monooxygenase sdnT (558 aa).

Residues 21 to 41 (IISLTTCFVCAFAVSFVALAI) traverse the membrane as a helical segment. Positions 298–317 (QNAGSNTRPKPPKRKQDTQP) are disordered. Asparagine 464 and asparagine 495 each carry an N-linked (GlcNAc...) asparagine glycan. Cysteine 505 serves as a coordination point for heme.

Belongs to the cytochrome P450 family. Requires heme as cofactor.

It is found in the membrane. Its pathway is antibiotic biosynthesis. In terms of biological role, cytochrome P450 monooxygenase; part of the gene cluster that mediates the biosynthesis of sordarin and hypoxysordarin, glycoside antibiotics with a unique tetracyclic diterpene aglycone structure. First, the geranylgeranyl diphosphate synthase sdnC constructs GGDP from farnesyl diphosphate and isopentenyl diphosphate. The diterpene cyclase sdnA then catalyzes the cyclization of GGDP to afford cycloaraneosene. Cycloaraneosene is then hydroxylated four times by the putative cytochrome P450 monooxygenases sdnB, sdnE, sdnF and sdnH to give a hydroxylated cycloaraneosene derivative such as cycloaraneosene-8,9,13,19-tetraol. Although the order of the hydroxylations is unclear, at least C8, C9 and C13 of the cycloaraneosene skeleton are hydroxylated before the sordaricin formation. Dehydration of the 13-hydroxy group of the hydroxylated cycloaraneosene derivative might be catalyzed by an unassigned hypothetical protein such as sdnG and sdnP to construct the cyclopentadiene moiety. The FAD-dependent oxidoreductase sdnN is proposed to catalyze the oxidation at C9 of the hydroxylated cycloaraneosene derivative and also catalyze the Baeyer-Villiger oxidation to give the lactone intermediate. The presumed lactone intermediate would be hydrolyzed to give an acrolein moiety and a carboxylate moiety. Then, [4+2]cycloaddition would occur between the acrolein moiety and the cyclopentadiene moiety to give sordaricin. SdnN might also be involved in the [4+2]cycloaddition after the hypothesized oxidation to accommodate the oxidized product and prompt the [4+2]cycloaddition. GDP-6-deoxy-D-altrose may be biosynthesized from GDP-D-mannose by the putative GDP-mannose-4,6-dehydratase sdnI and the short-chain dehydrogenase sdnK. The glycosyltransferase sdnJ catalyzes the attachment of 6-deoxy-D-altrose onto the 19-hydroxy group of sordaricin to give 4'-O-demethylsordarin. The methyltransferase sdnD would complete the biosynthesis of sordarin. Sordarin can be further modified into hypoxysordarin. The unique acyl chain at the 3'-hydroxy group of hypoxysordarin would be constructed by an iterative type I PKS sdnO and the trans-acting polyketide methyltransferase sdnL. SdnL would be responsible for the introduction of an alpha-methyl group of the polyketide chain. Alternatively, the beta-lactamase-like protein sdnR might be responsible for the cleavage and transfer of the polyketide chain from the PKS sdnO to sordarin. Two putative cytochrome P450 monooxygenases, sdnQ and sdnT, might catalyze the epoxidations of the polyketide chain to complete the biosynthesis of hypoxysordarin. Transcriptional regulators sdnM and sdnS are presumably encoded for the transcriptional regulation of the expression of the sdn gene cluster. This Sordaria araneosa (Pleurage araneosa) protein is Cytochrome P450 monooxygenase sdnT.